The chain runs to 309 residues: Ribosomal RNA small subunit methyltransferase H (309 aa).

Residues 39–41 (GGH), Asp-59, Phe-83, Asp-100, and Gln-107 each bind S-adenosyl-L-methionine.

The protein belongs to the methyltransferase superfamily. RsmH family.

It is found in the cytoplasm. The catalysed reaction is cytidine(1402) in 16S rRNA + S-adenosyl-L-methionine = N(4)-methylcytidine(1402) in 16S rRNA + S-adenosyl-L-homocysteine + H(+). In terms of biological role, specifically methylates the N4 position of cytidine in position 1402 (C1402) of 16S rRNA. The protein is Ribosomal RNA small subunit methyltransferase H of Delftia acidovorans (strain DSM 14801 / SPH-1).